Reading from the N-terminus, the 164-residue chain is NADH-quinone oxidoreductase subunit I (164 aa).

4Fe-4S ferredoxin-type domains are found at residues 55–85 and 95–124; these read LRRY…IDAE and TRYD…EGPN. [4Fe-4S] cluster contacts are provided by cysteine 65, cysteine 68, cysteine 71, cysteine 75, cysteine 104, cysteine 107, cysteine 110, and cysteine 114.

This sequence belongs to the complex I 23 kDa subunit family. As to quaternary structure, NDH-1 is composed of 14 different subunits. Subunits NuoA, H, J, K, L, M, N constitute the membrane sector of the complex. [4Fe-4S] cluster is required as a cofactor.

It localises to the cell inner membrane. It carries out the reaction a quinone + NADH + 5 H(+)(in) = a quinol + NAD(+) + 4 H(+)(out). NDH-1 shuttles electrons from NADH, via FMN and iron-sulfur (Fe-S) centers, to quinones in the respiratory chain. The immediate electron acceptor for the enzyme in this species is believed to be ubiquinone. Couples the redox reaction to proton translocation (for every two electrons transferred, four hydrogen ions are translocated across the cytoplasmic membrane), and thus conserves the redox energy in a proton gradient. The protein is NADH-quinone oxidoreductase subunit I of Ruegeria sp. (strain TM1040) (Silicibacter sp.).